The sequence spans 213 residues: ATP-dependent Clp protease proteolytic subunit (213 aa).

Residue Ser-114 is the Nucleophile of the active site. The active site involves His-139.

This sequence belongs to the peptidase S14 family. Fourteen ClpP subunits assemble into 2 heptameric rings which stack back to back to give a disk-like structure with a central cavity, resembling the structure of eukaryotic proteasomes.

The protein resides in the cytoplasm. The catalysed reaction is Hydrolysis of proteins to small peptides in the presence of ATP and magnesium. alpha-casein is the usual test substrate. In the absence of ATP, only oligopeptides shorter than five residues are hydrolyzed (such as succinyl-Leu-Tyr-|-NHMec, and Leu-Tyr-Leu-|-Tyr-Trp, in which cleavage of the -Tyr-|-Leu- and -Tyr-|-Trp bonds also occurs).. Functionally, cleaves peptides in various proteins in a process that requires ATP hydrolysis. Has a chymotrypsin-like activity. Plays a major role in the degradation of misfolded proteins. This is ATP-dependent Clp protease proteolytic subunit from Ectopseudomonas mendocina (strain ymp) (Pseudomonas mendocina).